Reading from the N-terminus, the 146-residue chain is Phospholipase A2 147 (146 aa).

Residues 1–19 (MYPAHLLVLLAVCVSLLGA) form the signal peptide. Positions 20-27 (ASVPPQPL) are excised as a propeptide. Disulfide bonds link cysteine 38-cysteine 98, cysteine 54-cysteine 145, cysteine 56-cysteine 72, cysteine 71-cysteine 126, cysteine 78-cysteine 119, cysteine 87-cysteine 112, and cysteine 105-cysteine 117. Ca(2+) is bound by residues tyrosine 55, glycine 57, and glycine 59. Residue histidine 75 is part of the active site. Aspartate 76 lines the Ca(2+) pocket. The active site involves aspartate 120.

It belongs to the phospholipase A2 family. Group I subfamily. D49 sub-subfamily. Requires Ca(2+) as cofactor. As to expression, expressed by the venom gland.

It is found in the secreted. It carries out the reaction a 1,2-diacyl-sn-glycero-3-phosphocholine + H2O = a 1-acyl-sn-glycero-3-phosphocholine + a fatty acid + H(+). Functionally, snake venom phospholipase A2 (PLA2) that inhibits collagen-induced platelet aggregation. PLA2 catalyzes the calcium-dependent hydrolysis of the 2-acyl groups in 3-sn-phosphoglycerides. This is Phospholipase A2 147 from Drysdalia coronoides (White-lipped snake).